A 253-amino-acid chain; its full sequence is Peptidase inhibitor R3HDML (253 aa).

Positions 1–24 (MPLLPSTVGLAGLLFWAGQAVNAL) are cleaved as a signal peptide. The propeptide occupies 25–56 (IMPNATPAPAQPESTAMRLLSGLEVPRYRRKR). The SCP domain occupies 67–207 (LDYHNHIRAS…HRAAYLVCNY (141 aa)). Asn120 carries an N-linked (GlcNAc...) asparagine glycan.

The protein belongs to the CRISP family.

The protein localises to the secreted. Its function is as follows. Putative serine protease inhibitor. This Homo sapiens (Human) protein is Peptidase inhibitor R3HDML (R3HDML).